Here is a 465-residue protein sequence, read N- to C-terminus: A-type ATP synthase subunit B (465 aa).

The protein belongs to the ATPase alpha/beta chains family. Has multiple subunits with at least A(3), B(3), C, D, E, F, H, I and proteolipid K(x).

It is found in the cell membrane. Component of the A-type ATP synthase that produces ATP from ADP in the presence of a proton gradient across the membrane. The B chain is a regulatory subunit. This is A-type ATP synthase subunit B from Thermococcus onnurineus (strain NA1).